A 363-amino-acid polypeptide reads, in one-letter code: 1-aminocyclopropane-1-carboxylate oxidase homolog (363 aa).

In terms of domain architecture, Fe2OG dioxygenase spans 212–312 (FHLFCSCNYY…MSITCFFGES (101 aa)). 3 residues coordinate Fe cation: His-236, Asp-238, and His-292.

It belongs to the iron/ascorbate-dependent oxidoreductase family.

The polypeptide is 1-aminocyclopropane-1-carboxylate oxidase homolog (ACO3) (Solanum lycopersicum (Tomato)).